A 493-amino-acid chain; its full sequence is Ketol-acid reductoisomerase (NADP(+)) (493 aa).

Residues L14–S208 enclose the KARI N-terminal Rossmann domain. NADP(+) is bound by residues C45–Q48, R68, R76, S78, and D108–Q110. H132 is a catalytic residue. G158 lines the NADP(+) pocket. 2 KARI C-terminal knotted domains span residues S209–G345 and E346–M486. D217, E221, E390, and E394 together coordinate Mg(2+). S415 provides a ligand contact to substrate.

It belongs to the ketol-acid reductoisomerase family. Mg(2+) serves as cofactor.

It carries out the reaction (2R)-2,3-dihydroxy-3-methylbutanoate + NADP(+) = (2S)-2-acetolactate + NADPH + H(+). The enzyme catalyses (2R,3R)-2,3-dihydroxy-3-methylpentanoate + NADP(+) = (S)-2-ethyl-2-hydroxy-3-oxobutanoate + NADPH + H(+). It functions in the pathway amino-acid biosynthesis; L-isoleucine biosynthesis; L-isoleucine from 2-oxobutanoate: step 2/4. Its pathway is amino-acid biosynthesis; L-valine biosynthesis; L-valine from pyruvate: step 2/4. Involved in the biosynthesis of branched-chain amino acids (BCAA). Catalyzes an alkyl-migration followed by a ketol-acid reduction of (S)-2-acetolactate (S2AL) to yield (R)-2,3-dihydroxy-isovalerate. In the isomerase reaction, S2AL is rearranged via a Mg-dependent methyl migration to produce 3-hydroxy-3-methyl-2-ketobutyrate (HMKB). In the reductase reaction, this 2-ketoacid undergoes a metal-dependent reduction by NADPH to yield (R)-2,3-dihydroxy-isovalerate. The polypeptide is Ketol-acid reductoisomerase (NADP(+)) (Histophilus somni (strain 2336) (Haemophilus somnus)).